Reading from the N-terminus, the 248-residue chain is UPF0736 protein Bcer98_0893 (248 aa).

Belongs to the UPF0736 family.

This chain is UPF0736 protein Bcer98_0893, found in Bacillus cytotoxicus (strain DSM 22905 / CIP 110041 / 391-98 / NVH 391-98).